The chain runs to 631 residues: Phosphomethylpyrimidine synthase (631 aa).

Substrate contacts are provided by residues Asn-239, Met-268, Tyr-297, His-333, 353–355 (SRG), 394–397 (DGLR), and Glu-433. Residue His-437 participates in Zn(2+) binding. Residue Tyr-460 coordinates substrate. Position 501 (His-501) interacts with Zn(2+). 3 residues coordinate [4Fe-4S] cluster: Cys-581, Cys-584, and Cys-589.

This sequence belongs to the ThiC family. In terms of assembly, homodimer. [4Fe-4S] cluster serves as cofactor.

The catalysed reaction is 5-amino-1-(5-phospho-beta-D-ribosyl)imidazole + S-adenosyl-L-methionine = 4-amino-2-methyl-5-(phosphooxymethyl)pyrimidine + CO + 5'-deoxyadenosine + formate + L-methionine + 3 H(+). The protein operates within cofactor biosynthesis; thiamine diphosphate biosynthesis. Its function is as follows. Catalyzes the synthesis of the hydroxymethylpyrimidine phosphate (HMP-P) moiety of thiamine from aminoimidazole ribotide (AIR) in a radical S-adenosyl-L-methionine (SAM)-dependent reaction. The polypeptide is Phosphomethylpyrimidine synthase (Escherichia coli (strain 55989 / EAEC)).